The primary structure comprises 509 residues: Maturase K (509 aa).

This sequence belongs to the intron maturase 2 family. MatK subfamily.

Its subcellular location is the plastid. The protein localises to the chloroplast. Usually encoded in the trnK tRNA gene intron. Probably assists in splicing its own and other chloroplast group II introns. The protein is Maturase K of Schlumbergera truncata (Thanksgiving cactus).